The following is a 484-amino-acid chain: Auxin transporter-like protein 2 (484 aa).

Topologically, residues 1 to 59 (MLPQKQGEEAIVSSFNETDQQEGVVGREEEVEDHSFSVKNFLWHGGSVWDAWFSCASNQ) are cytoplasmic. Residues 60–77 (VAQVLLTLPYSFSQLGML) traverse the membrane as a helical segment. Over 78 to 79 (SG) the chain is Extracellular. Residues 80-100 (ILLQVFYGILGSWTAYLISVL) form a helical membrane-spanning segment. Residues 101-135 (YVEYRSRKEKENVNFKNHVIQWFEVLDGLLGPYWK) lie on the Cytoplasmic side of the membrane. A helical membrane pass occupies residues 136 to 156 (ALGLAFNCTFLLFGSVIQLIA). The Extracellular segment spans residues 157 to 172 (CASNIYYINDNLDKRT). A helical transmembrane segment spans residues 173 to 193 (WTYIFGACCATTVFIPSFHNY). Over 194-196 (RIW) the chain is Cytoplasmic. The chain crosses the membrane as a helical span at residues 197–217 (SFLGLGMTTYTAWYLTIASIV). The Extracellular portion of the chain corresponds to 218–232 (HGQAENVTHTGPKKL). N-linked (GlcNAc...) asparagine glycosylation occurs at asparagine 223. A helical membrane pass occupies residues 233–253 (VLYFTGATNILYTFGGHAVTV). Residues 254–266 (EIMHAMWKPQKFK) lie on the Cytoplasmic side of the membrane. The chain crosses the membrane as a helical span at residues 267–287 (YIYLMATLYVFTLTIPSATAV). Topologically, residues 288–314 (YWAFGDELLNHSNAFSLLPKNGWRDGA) are extracellular. The N-linked (GlcNAc...) asparagine glycan is linked to asparagine 297. Residues 315–335 (VILMLIHQFITFGFACTPLYF) traverse the membrane as a helical segment. Topologically, residues 336–356 (VWEKVIGMHDTRSICLRALAR) are cytoplasmic. A helical membrane pass occupies residues 357–377 (LPVVIPIWFLAIIFPFFGPIN). Residue serine 378 is a topological domain, extracellular. The helical transmembrane segment at 379 to 399 (AVGALLVSFTVYIIPSAAHML) threads the bilayer. Residues 400–425 (TYRKASARKNAAEKPPFFMPSWTAMY) are Cytoplasmic-facing. A helical membrane pass occupies residues 426–446 (IFNAFIVIWVLVVGFGFGGWA). Residues 447–484 (SMTNFIRQIDTFGLFAKCYQCKPPPVMAAAPPPHALHH) lie on the Extracellular side of the membrane.

It belongs to the amino acid/polyamine transporter 2 family. Amino acid/auxin permease (AAAP) (TC 2.A.18.1) subfamily. In terms of tissue distribution, shoots and roots of nodulating plants. Higher levels in roots, flowers and stems, lower in nodules, leaves, petioles and shoot apices.

The protein resides in the cell membrane. Functionally, carrier protein involved in proton-driven auxin influx. Mediates the formation of auxin gradient from developing leaves (site of auxin biosynthesis) to tips by contributing to the loading of auxin in vascular tissues and facilitating acropetal (base to tip) auxin transport within inner tissues of the root apex, and basipetal (tip to base) auxin transport within outer tissues of the root apex. May be involved in lateral roots and nodules formation. This is Auxin transporter-like protein 2 (LAX2) from Medicago truncatula (Barrel medic).